The following is a 534-amino-acid chain: Serine/threonine-protein kinase ppk15 (534 aa).

The interval 1 to 40 (MDSDSPILPLSNNPPAARTHDHSQRNNHARHVSSSGTTLF) is disordered. Phosphoserine is present on residues Ser-33, Ser-56, and Ser-60. A disordered region spans residues 85–104 (FSSEQNPRRPLTKPSEGVHN). The Protein kinase domain maps to 130-458 (YLILDTLGHG…PDQAKNHPFI (329 aa)). ATP is bound by residues 136–144 (LGHGTFGQV) and Lys-159. Asp-257 functions as the Proton acceptor in the catalytic mechanism. Tyr-291 carries the post-translational modification Phosphotyrosine.

Belongs to the protein kinase superfamily. Ser/Thr protein kinase family.

Its subcellular location is the cytoplasm. The protein resides in the cytoskeleton. The protein localises to the microtubule organizing center. It localises to the spindle pole body. The catalysed reaction is L-seryl-[protein] + ATP = O-phospho-L-seryl-[protein] + ADP + H(+). It catalyses the reaction L-threonyl-[protein] + ATP = O-phospho-L-threonyl-[protein] + ADP + H(+). The polypeptide is Serine/threonine-protein kinase ppk15 (ppk15) (Schizosaccharomyces pombe (strain 972 / ATCC 24843) (Fission yeast)).